A 205-amino-acid chain; its full sequence is MGYPGQAKKLYDTPNHPWQKARIDEETSLVKKYGLRNKKSVWKHASDLRKYRSNARALLGVMSAGNLPEDSHYIRDAQNIVKKLQTLGILKEDAKLEDVLALKVDDIMERRLQTIIYRKGFANSIKQARQFIVHGHISLNGRKITVPGYLVLKSEEDMLSYYVGSPITKEKLMAKPQPASAPKAAAAPKAAAAPAEAAAAPKKEE.

An S4 RNA-binding domain is found at 110–172 (RRLQTIIYRK…VGSPITKEKL (63 aa)). Residues 173–205 (MAKPQPASAPKAAAAPKAAAAPAEAAAAPKKEE) form a disordered region. The span at 174–205 (AKPQPASAPKAAAAPKAAAAPAEAAAAPKKEE) shows a compositional bias: low complexity.

It belongs to the universal ribosomal protein uS4 family. Part of the 30S ribosomal subunit. Contacts protein S5. The interaction surface between S4 and S5 is involved in control of translational fidelity.

Functionally, one of the primary rRNA binding proteins, it binds directly to 16S rRNA where it nucleates assembly of the body of the 30S subunit. Its function is as follows. With S5 and S12 plays an important role in translational accuracy. The protein is Small ribosomal subunit protein uS4 of Methanocella arvoryzae (strain DSM 22066 / NBRC 105507 / MRE50).